Here is a 429-residue protein sequence, read N- to C-terminus: Ribosomal RNA small subunit methyltransferase B (429 aa).

S-adenosyl-L-methionine is bound by residues 254–260 (CAAPGGK), Asp277, Asp303, and Asp322. The active-site Nucleophile is the Cys375.

It belongs to the class I-like SAM-binding methyltransferase superfamily. RsmB/NOP family.

It localises to the cytoplasm. The catalysed reaction is cytidine(967) in 16S rRNA + S-adenosyl-L-methionine = 5-methylcytidine(967) in 16S rRNA + S-adenosyl-L-homocysteine + H(+). Functionally, specifically methylates the cytosine at position 967 (m5C967) of 16S rRNA. The sequence is that of Ribosomal RNA small subunit methyltransferase B from Erwinia tasmaniensis (strain DSM 17950 / CFBP 7177 / CIP 109463 / NCPPB 4357 / Et1/99).